The sequence spans 256 residues: uncharacterized protein (256 aa).

Transmembrane regions (helical) follow at residues 181–201 (CCII…ASMV) and 231–251 (GIAV…GLIA).

It localises to the cell membrane. This is an uncharacterized protein from Methanocaldococcus jannaschii (strain ATCC 43067 / DSM 2661 / JAL-1 / JCM 10045 / NBRC 100440) (Methanococcus jannaschii).